The primary structure comprises 696 residues: Two-component response regulator ORR22 (696 aa).

Residues 27-142 (RVLAVDDDPV…ELRNIWQHVV (116 aa)) form the Response regulatory domain. Position 78 is a 4-aspartylphosphate (aspartate 78). Positions 154 to 214 (LDFSKECNKP…DYQENDEPSA (61 aa)) are disordered. Positions 176 to 185 (TCGSSDQNGR) are enriched in polar residues. A compositionally biased stretch (acidic residues) spans 195–211 (GEDDDEGDDNDYQENDE). Positions 214-273 (AAKKPRVVWSVELHRKFVAAVNQLGIDKAVPKRILELMNVEKLTRENVASHLQKYRLYLK) form a DNA-binding region, myb-like GARP.

Belongs to the ARR family. Type-B subfamily. In terms of processing, two-component system major event consists of a His-to-Asp phosphorelay between a sensor histidine kinase (HK) and a response regulator (RR). In plants, the His-to-Asp phosphorelay involves an additional intermediate named Histidine-containing phosphotransfer protein (HPt). This multistep phosphorelay consists of a His-Asp-His-Asp sequential transfer of a phosphate group between first a His and an Asp of the HK protein, followed by the transfer to a conserved His of the HPt protein and finally the transfer to an Asp in the receiver domain of the RR protein.

The protein resides in the nucleus. Transcriptional activator that binds specific DNA sequence. Functions as a response regulator involved in His-to-Asp phosphorelay signal transduction system. Phosphorylation of the Asp residue in the receiver domain activates the ability of the protein to promote the transcription of target genes. May directly activate some type-A response regulators in response to cytokinins. Functions as a response regulator in response to cytokinins. The protein is Two-component response regulator ORR22 of Oryza sativa subsp. japonica (Rice).